Reading from the N-terminus, the 137-residue chain is NADH dehydrogenase [ubiquinone] 1 beta subcomplex subunit 7 (137 aa).

Glycine 2 carries the N-myristoyl glycine lipid modification. The CHCH domain occupies 56-98 (RDYCAHHLIRLLKCKRDSFPNFLACKQERHDWDYCEHRDYVMR). A Cx9C motif 1 motif is present at residues 59–69 (CAHHLIRLLKC). Intrachain disulfides connect cysteine 59-cysteine 90 and cysteine 69-cysteine 80. The residue at position 73 (serine 73) is a Phosphoserine. The Cx9C motif 2 signature appears at 80-90 (CKQERHDWDYC). Residues 113–137 (KRREKKAAELAKGQGPGEVDPKVAL) form a disordered region.

Belongs to the complex I NDUFB7 subunit family. In terms of assembly, complex I is composed of 45 different subunits.

The protein resides in the mitochondrion inner membrane. It is found in the mitochondrion intermembrane space. Its function is as follows. Accessory subunit of the mitochondrial membrane respiratory chain NADH dehydrogenase (Complex I), that is believed not to be involved in catalysis. Complex I functions in the transfer of electrons from NADH to the respiratory chain. The immediate electron acceptor for the enzyme is believed to be ubiquinone. The polypeptide is NADH dehydrogenase [ubiquinone] 1 beta subcomplex subunit 7 (NDUFB7) (Homo sapiens (Human)).